The primary structure comprises 323 residues: Putative HTH-type transcriptional regulatory protein Hlac_0273 (323 aa).

In terms of domain architecture, HTH cro/C1-type spans 132–189; that stretch reads LADEREERGWSLGRLATELGVSRRTVSKYEDGMNASIEVAIQLEDLFNEPFSSPVDVL. The H-T-H motif DNA-binding region spans 143–162; sequence LGRLATELGVSRRTVSKYED. Residues 188–211 are disordered; sequence VLDGAGEVRDADPTPSAPETDPDD.

The protein is Putative HTH-type transcriptional regulatory protein Hlac_0273 of Halorubrum lacusprofundi (strain ATCC 49239 / DSM 5036 / JCM 8891 / ACAM 34).